We begin with the raw amino-acid sequence, 230 residues long: Extracellular deoxyribonuclease (230 aa).

Residues 1 to 20 (MFRPLLSLCLALLVSAPAHA) form the signal peptide.

Belongs to the EndA/NucM nuclease family.

It localises to the secreted. In Aeromonas hydrophila, this protein is Extracellular deoxyribonuclease (dns).